Here is an 88-residue protein sequence, read N- to C-terminus: Small ribosomal subunit protein uS17 (88 aa).

The protein belongs to the universal ribosomal protein uS17 family. In terms of assembly, part of the 30S ribosomal subunit.

One of the primary rRNA binding proteins, it binds specifically to the 5'-end of 16S ribosomal RNA. This is Small ribosomal subunit protein uS17 from Xylella fastidiosa (strain M23).